The chain runs to 334 residues: Holliday junction branch migration complex subunit RuvB (334 aa).

A large ATPase domain (RuvB-L) region spans residues 1-181; it reads MQDRLISGTE…FGIVQRLEFY (181 aa). ATP contacts are provided by residues Ile-20, Arg-21, Gly-62, Lys-65, Thr-66, Thr-67, 128-130, Arg-171, Tyr-181, and Arg-218; that span reads EDY. Position 66 (Thr-66) interacts with Mg(2+). The small ATPAse domain (RuvB-S) stretch occupies residues 182 to 252; the sequence is SVEDLTHIVS…MAQRALDMLN (71 aa). Residues 255-334 are head domain (RuvB-H); the sequence is KAGLDTLDRR…FGMTPPEPKN (80 aa). DNA contacts are provided by Arg-310 and Arg-315.

This sequence belongs to the RuvB family. As to quaternary structure, homohexamer. Forms an RuvA(8)-RuvB(12)-Holliday junction (HJ) complex. HJ DNA is sandwiched between 2 RuvA tetramers; dsDNA enters through RuvA and exits via RuvB. An RuvB hexamer assembles on each DNA strand where it exits the tetramer. Each RuvB hexamer is contacted by two RuvA subunits (via domain III) on 2 adjacent RuvB subunits; this complex drives branch migration. In the full resolvosome a probable DNA-RuvA(4)-RuvB(12)-RuvC(2) complex forms which resolves the HJ.

The protein localises to the cytoplasm. It carries out the reaction ATP + H2O = ADP + phosphate + H(+). Its function is as follows. The RuvA-RuvB-RuvC complex processes Holliday junction (HJ) DNA during genetic recombination and DNA repair, while the RuvA-RuvB complex plays an important role in the rescue of blocked DNA replication forks via replication fork reversal (RFR). RuvA specifically binds to HJ cruciform DNA, conferring on it an open structure. The RuvB hexamer acts as an ATP-dependent pump, pulling dsDNA into and through the RuvAB complex. RuvB forms 2 homohexamers on either side of HJ DNA bound by 1 or 2 RuvA tetramers; 4 subunits per hexamer contact DNA at a time. Coordinated motions by a converter formed by DNA-disengaged RuvB subunits stimulates ATP hydrolysis and nucleotide exchange. Immobilization of the converter enables RuvB to convert the ATP-contained energy into a lever motion, pulling 2 nucleotides of DNA out of the RuvA tetramer per ATP hydrolyzed, thus driving DNA branch migration. The RuvB motors rotate together with the DNA substrate, which together with the progressing nucleotide cycle form the mechanistic basis for DNA recombination by continuous HJ branch migration. Branch migration allows RuvC to scan DNA until it finds its consensus sequence, where it cleaves and resolves cruciform DNA. The protein is Holliday junction branch migration complex subunit RuvB of Acinetobacter baumannii (strain AB307-0294).